The chain runs to 257 residues: Fructose-2,6-bisphosphatase TIGAR B (257 aa).

Catalysis depends on histidine 11, which acts as the Tele-phosphohistidine intermediate. Catalysis depends on glutamate 89, which acts as the Proton donor/acceptor.

It belongs to the phosphoglycerate mutase family.

It localises to the cytoplasm. The protein localises to the nucleus. It is found in the mitochondrion. The enzyme catalyses beta-D-fructose 2,6-bisphosphate + H2O = beta-D-fructose 6-phosphate + phosphate. Its function is as follows. Fructose-bisphosphatase hydrolyzing fructose-2,6-bisphosphate as well as fructose-1,6-bisphosphate. Acts as a negative regulator of glycolysis by lowering intracellular levels of fructose-2,6-bisphosphate in a p53/TP53-dependent manner, resulting in the pentose phosphate pathway (PPP) activation and NADPH production. Contributes to the generation of reduced glutathione to cause a decrease in intracellular reactive oxygen species (ROS) content, correlating with its ability to protect cells from oxidative or metabolic stress-induced cell death. May play a role in mitophagy inhibition. This chain is Fructose-2,6-bisphosphatase TIGAR B, found in Danio rerio (Zebrafish).